A 590-amino-acid chain; its full sequence is Methionine--tRNA ligase, mitochondrial (590 aa).

Residues 1 to 26 (MRTRFLFLTSGCKAVPELHKIVLANA) constitute a mitochondrion transit peptide. A 'HIGH' region motif is present at residues 51–61 (FYVNASPHLGH). Residues 342–346 (KMSKS) carry the 'KMSKS' region motif. K345 is an ATP binding site. Residues 570 to 590 (LESQRADQQKNRKMEKGSNLK) are disordered. Residues 571–590 (ESQRADQQKNRKMEKGSNLK) are compositionally biased toward basic and acidic residues.

The protein belongs to the class-I aminoacyl-tRNA synthetase family.

It localises to the mitochondrion matrix. It catalyses the reaction tRNA(Met) + L-methionine + ATP = L-methionyl-tRNA(Met) + AMP + diphosphate. This is Methionine--tRNA ligase, mitochondrial (mars2) from Takifugu rubripes (Japanese pufferfish).